Consider the following 307-residue polypeptide: Aspartate carbamoyltransferase catalytic subunit (307 aa).

Positions 56 and 57 each coordinate carbamoyl phosphate. Lys-84 is an L-aspartate binding site. Arg-106, His-136, and Gln-139 together coordinate carbamoyl phosphate. Residues Arg-169 and Arg-221 each contribute to the L-aspartate site. Ala-262 and Pro-263 together coordinate carbamoyl phosphate.

Belongs to the aspartate/ornithine carbamoyltransferase superfamily. ATCase family. Heterododecamer (2C3:3R2) of six catalytic PyrB chains organized as two trimers (C3), and six regulatory PyrI chains organized as three dimers (R2).

It catalyses the reaction carbamoyl phosphate + L-aspartate = N-carbamoyl-L-aspartate + phosphate + H(+). Its pathway is pyrimidine metabolism; UMP biosynthesis via de novo pathway; (S)-dihydroorotate from bicarbonate: step 2/3. Its function is as follows. Catalyzes the condensation of carbamoyl phosphate and aspartate to form carbamoyl aspartate and inorganic phosphate, the committed step in the de novo pyrimidine nucleotide biosynthesis pathway. In Streptococcus pneumoniae (strain JJA), this protein is Aspartate carbamoyltransferase catalytic subunit.